We begin with the raw amino-acid sequence, 348 residues long: Protein RecA (348 aa).

68–75 provides a ligand contact to ATP; the sequence is GPESSGKT.

It belongs to the RecA family.

It localises to the cytoplasm. Can catalyze the hydrolysis of ATP in the presence of single-stranded DNA, the ATP-dependent uptake of single-stranded DNA by duplex DNA, and the ATP-dependent hybridization of homologous single-stranded DNAs. It interacts with LexA causing its activation and leading to its autocatalytic cleavage. In Rhodococcus opacus (strain B4), this protein is Protein RecA.